We begin with the raw amino-acid sequence, 307 residues long: MSDPSMTSDGATTHSGFVAIVGKPNVGKSTLLNSFLGTKVAPTSPRPQTTRRGVRGISTTDTHQIVFVDTPGLHKPKDALGKYMNHEVHSALADVDVIIWVVDLRHPPTDEDELVARQVRELPKPLFLVGNKTDAAKYPDEAMKLYRAQLEGRSAETSEIMLSAQNNPLQVATLREQILDILPENPFFYPRGAASDQSRETWAAEIIREEAMKKLREELPYAVATRVNRWTEREDGLQRIEGEIVVEKNAHKGMVIGSGGKQLREIGQAARKQLEVFLDRKVFLGLEVIVIPGWREDEEALRELGYE.

The 171-residue stretch at 14–184 (HSGFVAIVGK…REQILDILPE (171 aa)) folds into the Era-type G domain. The tract at residues 22-29 (GKPNVGKS) is G1. 22-29 (GKPNVGKS) contributes to the GTP binding site. The segment at 48–52 (QTTRR) is G2. The segment at 69–72 (DTPG) is G3. Residues 69-73 (DTPGL) and 131-134 (NKTD) each bind GTP. The interval 131–134 (NKTD) is G4. Residues 162 to 164 (LSA) form a G5 region. The 78-residue stretch at 215 to 292 (LREELPYAVA…FLGLEVIVIP (78 aa)) folds into the KH type-2 domain.

It belongs to the TRAFAC class TrmE-Era-EngA-EngB-Septin-like GTPase superfamily. Era GTPase family. Monomer.

It localises to the cytoplasm. Its subcellular location is the cell membrane. Functionally, an essential GTPase that binds both GDP and GTP, with rapid nucleotide exchange. Plays a role in 16S rRNA processing and 30S ribosomal subunit biogenesis and possibly also in cell cycle regulation and energy metabolism. The sequence is that of GTPase Era from Deinococcus deserti (strain DSM 17065 / CIP 109153 / LMG 22923 / VCD115).